The primary structure comprises 732 residues: MKSVKIMGTMPPSISLAKAHERISQHWQNPVGELNIGGKRYRIIDNQVLRLNPHSGFSLFREGVGKIFSGKMFNFSIARNLTDTLHAAQKTTSQELRSDIPNALSNLFGAKPQTELPLGWKGEPLSGAPDLEGMRVAETDKFAEGESHISIIETKDKQRLVAKIERSIAEGHLFAELEAYKHIYKTAGKHPNLANVHGMAVVPYGNRKEEALLMDEVDGWRCSDTLRTLADSWKQGKINSEAYWGTIKFIAHRLLDVTNHLAKAGVVHNDIKPGNVVFDRASGEPVVIDLGLHSRSGEQPKGFTESFKAPELGVGNLGASEKSDVFLVVSTLLHCIEGFEKNPEIKPNQGLRFITSEPAHVMDENGYPIHRPGIAGVETAYTRFITDILGVSADSRPDSNEARLHEFLSDGTIDEESAKQILKDTLTGEMSPLSTDVRRITPKKLRELSDLLRTHLSSAATKQLDMGGVLSDLDTMLVALDKAEREGGVDKDQLKSFNSLILKTYRVIEDYVKGREGDTKNSSTEVSPYHRSNFMLSIVEPSLQRIQKHLDQTHSFSDIGSLVRAHKHLETLLEVLVTLSQQGQPVSSETYGFLNRLTEAKITLSQQLNTLQQQQESAKAQLSILINRSGSWADVARQSLQRFDSTRPVVKFGTEQYTAIHRQMMAAHAAITLQEVSEFTDDMRNFTVDSIPLLIQLGRSSLMDEHLVEQREKLRELTTIAERLNRLEREWM.

Positions 136–408 (VAETDKFAEG…SNEARLHEFL (273 aa)) constitute a Protein kinase domain. ATP-binding positions include 142-150 (FAEGESHIS) and lysine 163. Aspartate 270 (proton acceptor) is an active-site residue.

The protein belongs to the protein kinase superfamily. Ser/Thr protein kinase family.

The protein resides in the secreted. It carries out the reaction L-seryl-[protein] + ATP = O-phospho-L-seryl-[protein] + ADP + H(+). It catalyses the reaction L-threonyl-[protein] + ATP = O-phospho-L-threonyl-[protein] + ADP + H(+). Functionally, acts as a virulence determinant. This is Protein kinase YpkA (ypkA) from Yersinia pestis.